The chain runs to 377 residues: tRNA-specific 2-thiouridylase MnmA (377 aa).

ATP is bound by residues 17 to 24 and methionine 43; that span reads GMSGGVDS. The interval 103-105 is interaction with target base in tRNA; the sequence is NPD. Cysteine 108 functions as the Nucleophile in the catalytic mechanism. Cysteine 108 and cysteine 204 are joined by a disulfide. Glycine 132 serves as a coordination point for ATP. An interaction with tRNA region spans residues 154–156; that stretch reads KDQ. Catalysis depends on cysteine 204, which acts as the Cysteine persulfide intermediate. The interaction with tRNA stretch occupies residues 316–317; sequence RY.

Belongs to the MnmA/TRMU family.

The protein resides in the cytoplasm. The catalysed reaction is S-sulfanyl-L-cysteinyl-[protein] + uridine(34) in tRNA + AH2 + ATP = 2-thiouridine(34) in tRNA + L-cysteinyl-[protein] + A + AMP + diphosphate + H(+). Catalyzes the 2-thiolation of uridine at the wobble position (U34) of tRNA, leading to the formation of s(2)U34. This Pseudomonas fluorescens (strain ATCC BAA-477 / NRRL B-23932 / Pf-5) protein is tRNA-specific 2-thiouridylase MnmA.